The primary structure comprises 558 residues: DNA ligase B (558 aa).

The active-site N6-AMP-lysine intermediate is K124.

This sequence belongs to the NAD-dependent DNA ligase family. LigB subfamily.

The catalysed reaction is NAD(+) + (deoxyribonucleotide)n-3'-hydroxyl + 5'-phospho-(deoxyribonucleotide)m = (deoxyribonucleotide)n+m + AMP + beta-nicotinamide D-nucleotide.. Catalyzes the formation of phosphodiester linkages between 5'-phosphoryl and 3'-hydroxyl groups in double-stranded DNA using NAD as a coenzyme and as the energy source for the reaction. The chain is DNA ligase B from Klebsiella pneumoniae (strain 342).